The sequence spans 274 residues: 2,3,4,5-tetrahydropyridine-2,6-dicarboxylate N-succinyltransferase (274 aa).

It belongs to the transferase hexapeptide repeat family.

The protein localises to the cytoplasm. The enzyme catalyses (S)-2,3,4,5-tetrahydrodipicolinate + succinyl-CoA + H2O = (S)-2-succinylamino-6-oxoheptanedioate + CoA. Its pathway is amino-acid biosynthesis; L-lysine biosynthesis via DAP pathway; LL-2,6-diaminopimelate from (S)-tetrahydrodipicolinate (succinylase route): step 1/3. This Salmonella agona (strain SL483) protein is 2,3,4,5-tetrahydropyridine-2,6-dicarboxylate N-succinyltransferase.